The chain runs to 367 residues: tRNA-specific 2-thiouridylase MnmA (367 aa).

ATP-binding positions include 13–20 (GLSGGVDS) and M39. Positions 99-101 (NPD) are interaction with target base in tRNA. The Nucleophile role is filled by C104. C104 and C200 are oxidised to a cystine. G128 serves as a coordination point for ATP. Residues 150-152 (KDQ) form an interaction with tRNA region. Catalysis depends on C200, which acts as the Cysteine persulfide intermediate. Residues 307–308 (RY) form an interaction with tRNA region.

Belongs to the MnmA/TRMU family.

The protein localises to the cytoplasm. It carries out the reaction S-sulfanyl-L-cysteinyl-[protein] + uridine(34) in tRNA + AH2 + ATP = 2-thiouridine(34) in tRNA + L-cysteinyl-[protein] + A + AMP + diphosphate + H(+). Functionally, catalyzes the 2-thiolation of uridine at the wobble position (U34) of tRNA, leading to the formation of s(2)U34. This is tRNA-specific 2-thiouridylase MnmA from Neisseria meningitidis serogroup A / serotype 4A (strain DSM 15465 / Z2491).